Reading from the N-terminus, the 613-residue chain is Arginine--tRNA ligase (613 aa).

The 'HIGH' region motif lies at 123 to 133; the sequence is PNVAKPMHVGH.

This sequence belongs to the class-I aminoacyl-tRNA synthetase family. In terms of assembly, monomer.

Its subcellular location is the cytoplasm. The catalysed reaction is tRNA(Arg) + L-arginine + ATP = L-arginyl-tRNA(Arg) + AMP + diphosphate. This chain is Arginine--tRNA ligase, found in Caulobacter sp. (strain K31).